Reading from the N-terminus, the 197-residue chain is MAPTTVIADNNCNEESSNSFEMEIEAESAILEQIQNKMAKNLESAAYVPPTEEEQKAIDAKSVFIGNVDFNSTIEEVEEHFKGCGHIVRTTIPKDKFTKKQKNFAYIEFDDSSSIENALVMNGSLFRSRPIVVTAKRTNIPGMGHGVRGSSRGTFGRGRGAARGAPGRQQTVVVKYVYVNGPNRGGRGGRGRRFNPY.

One can recognise an RRM domain in the interval 61-138 (KSVFIGNVDF…RPIVVTAKRT (78 aa)). Residues 142–166 (GMGHGVRGSSRGTFGRGRGAARGAP) are disordered.

In Caenorhabditis elegans, this protein is Putative RNA-binding protein EEED8.12.